We begin with the raw amino-acid sequence, 401 residues long: NADH-quinone oxidoreductase subunit D (401 aa).

It belongs to the complex I 49 kDa subunit family. As to quaternary structure, NDH-1 is composed of 14 different subunits. Subunits NuoB, C, D, E, F, and G constitute the peripheral sector of the complex.

The protein localises to the cell inner membrane. It catalyses the reaction a quinone + NADH + 5 H(+)(in) = a quinol + NAD(+) + 4 H(+)(out). Functionally, NDH-1 shuttles electrons from NADH, via FMN and iron-sulfur (Fe-S) centers, to quinones in the respiratory chain. The immediate electron acceptor for the enzyme in this species is believed to be ubiquinone. Couples the redox reaction to proton translocation (for every two electrons transferred, four hydrogen ions are translocated across the cytoplasmic membrane), and thus conserves the redox energy in a proton gradient. This chain is NADH-quinone oxidoreductase subunit D, found in Rhodopseudomonas palustris (strain HaA2).